The following is a 305-amino-acid chain: Large ribosomal subunit protein uL3c (305 aa).

The N-terminal 84 residues, 1 to 84 (MAAILPTFSI…AVGGLEIKMM (84 aa)), are a transit peptide targeting the chloroplast. Residues 228 to 256 (SHRALGSIGAGTTPGHVYKGKKMPGRMGG) form a disordered region.

Component of the chloroplast large ribosomal subunit (LSU). Mature 70S chloroplast ribosomes of higher plants consist of a small (30S) and a large (50S) subunit. The 30S small subunit contains 1 molecule of ribosomal RNA (16S rRNA) and 24 different proteins. The 50S large subunit contains 3 rRNA molecules (23S, 5S and 4.5S rRNA) and 33 different proteins.

The protein localises to the plastid. It is found in the chloroplast. Component of the chloroplast ribosome (chloro-ribosome), a dedicated translation machinery responsible for the synthesis of chloroplast genome-encoded proteins, including proteins of the transcription and translation machinery and components of the photosynthetic apparatus. The chain is Large ribosomal subunit protein uL3c (RPL3) from Spinacia oleracea (Spinach).